The primary structure comprises 234 residues: Ribose-5-phosphate isomerase A (234 aa).

Substrate is bound by residues 35–38 (SGTT), 91–94 (DGAD), and 105–108 (KGGG). Catalysis depends on Glu-114, which acts as the Proton acceptor. Position 132 (Lys-132) interacts with substrate.

Belongs to the ribose 5-phosphate isomerase family. In terms of assembly, homodimer.

It carries out the reaction aldehydo-D-ribose 5-phosphate = D-ribulose 5-phosphate. It functions in the pathway carbohydrate degradation; pentose phosphate pathway; D-ribose 5-phosphate from D-ribulose 5-phosphate (non-oxidative stage): step 1/1. Functionally, catalyzes the reversible conversion of ribose-5-phosphate to ribulose 5-phosphate. The protein is Ribose-5-phosphate isomerase A of Methanococcus aeolicus (strain ATCC BAA-1280 / DSM 17508 / OCM 812 / Nankai-3).